A 309-amino-acid chain; its full sequence is Isopentenyl-diphosphate Delta-isomerase II (309 aa).

Residue Lys-112 participates in substrate binding. Mg(2+) contacts are provided by His-116 and His-128. One can recognise a Nudix hydrolase domain in the interval 126 to 278 (LLHRAFSVFL…GLKLSPWFRL (153 aa)). Substrate contacts are provided by Arg-147 and Lys-151. Cys-163 is an active-site residue. Ser-164 is a binding site for substrate. 2 residues coordinate Mg(2+): Glu-223 and Glu-225. Glu-225 is a catalytic residue.

This sequence belongs to the IPP isomerase type 1 family. Mg(2+) is required as a cofactor.

It catalyses the reaction isopentenyl diphosphate = dimethylallyl diphosphate. It functions in the pathway isoprenoid biosynthesis; dimethylallyl diphosphate biosynthesis; dimethylallyl diphosphate from isopentenyl diphosphate: step 1/1. It participates in porphyrin-containing compound metabolism; chlorophyll biosynthesis. Its function is as follows. Catalyzes the 1,3-allylic rearrangement of the homoallylic substrate isopentenyl (IPP) to its highly electrophilic allylic isomer, dimethylallyl diphosphate (DMAPP). The chain is Isopentenyl-diphosphate Delta-isomerase II (IPI2) from Camptotheca acuminata (Happy tree).